A 1141-amino-acid chain; its full sequence is Translocase of chloroplast 125, chloroplastic (1141 aa).

Disordered regions lie at residues M1–Y177 and G325–E431. Basic and acidic residues-rich tracts occupy residues R57 to G72 and I107 to L121. Residues Y132–E150 are compositionally biased toward acidic residues. Low complexity predominate over residues S151–N167. The segment covering E328–I353 has biased composition (acidic residues). 2 stretches are compositionally biased toward low complexity: residues R389–T401 and T408–A429. Positions D505–K734 constitute an AIG1-type G domain. Residues G514–S521 form a G1 region. G517–A522 contributes to the GTP binding site. Mg(2+) is bound at residue S521. The segment at S541–V545 is G2. The G3 stretch occupies residues D561–G564. A G4 region spans residues T633 to S636. Residues H634 and E682–N683 each bind GTP. The G5 stretch occupies residues E682 to H684. Disordered regions lie at residues Q758–P795 and I832–M871. Positions E770–D789 are enriched in acidic residues. A compositionally biased stretch (basic residues) spans I832–Q841. A helical transmembrane segment spans residues M1116 to G1136.

The protein belongs to the TRAFAC class TrmE-Era-EngA-EngB-Septin-like GTPase superfamily. AIG1/Toc34/Toc159-like paraseptin GTPase family. TOC159 subfamily. As to quaternary structure, part of the TOC core complex. Requires Mg(2+) as cofactor.

The protein localises to the plastid. The protein resides in the chloroplast outer membrane. In terms of biological role, GTPase involved in protein precursor import into chloroplasts. Seems to recognize chloroplast-destined precursor proteins and regulate their presentation to the translocation channel through GTP hydrolysis. Probably specialized in the import of nuclear encoded non-photosynthetic preproteins from the cytoplasm to the chloroplast. This chain is Translocase of chloroplast 125, chloroplastic, found in Physcomitrium patens (Spreading-leaved earth moss).